The sequence spans 271 residues: Tryptophan synthase alpha chain (271 aa).

Catalysis depends on proton acceptor residues Glu-49 and Asp-60.

It belongs to the TrpA family. As to quaternary structure, tetramer of two alpha and two beta chains.

It catalyses the reaction (1S,2R)-1-C-(indol-3-yl)glycerol 3-phosphate + L-serine = D-glyceraldehyde 3-phosphate + L-tryptophan + H2O. Its pathway is amino-acid biosynthesis; L-tryptophan biosynthesis; L-tryptophan from chorismate: step 5/5. Its function is as follows. The alpha subunit is responsible for the aldol cleavage of indoleglycerol phosphate to indole and glyceraldehyde 3-phosphate. In Nitrosococcus oceani (strain ATCC 19707 / BCRC 17464 / JCM 30415 / NCIMB 11848 / C-107), this protein is Tryptophan synthase alpha chain.